Here is a 458-residue protein sequence, read N- to C-terminus: LysM domain-containing protein ARB_05157 (458 aa).

Residues 1 to 19 (MVSLKVCFLLLASSELAFG) form the signal peptide. The region spanning 157–203 (AFHLVKQGEDCGTISATYGITSAQFLAWNPSAGKDCTGLWANAYACV) is the LysM 1 domain. A disordered region spans residues 210–232 (PPKTTSQAPQPTPTKPSNGIETP). The segment covering 212–229 (KTTSQAPQPTPTKPSNGI) has biased composition (polar residues). LysM domains lie at 245–291 (KFHL…YACV), 325–371 (KFYL…YSCV), and 409–455 (KFHF…YLCV).

It is found in the secreted. Its function is as follows. Might have a role in sequestration of chitin oligosaccharides (breakdown products of fungal cell walls that are released during invasion and act as triggers of host immunity) to dampen host defense. The protein is LysM domain-containing protein ARB_05157 of Arthroderma benhamiae (strain ATCC MYA-4681 / CBS 112371) (Trichophyton mentagrophytes).